The chain runs to 396 residues: Cytochrome b (396 aa).

The next 4 helical transmembrane spans lie at 32-52, 76-98, 113-133, and 179-199; these read FGSL…TLAM, WLLR…LHIG, LWSI…IGYV, and FFSL…MHLL. Heme b-binding residues include histidine 82 and histidine 96. Heme b-binding residues include histidine 183 and histidine 197. Histidine 202 serves as a coordination point for a ubiquinone. The next 4 membrane-spanning stretches (helical) occupy residues 225–245, 289–309, 321–341, and 348–368; these read FTSK…IFVF, LGGV…ALIH, LLNL…WVGA, and YILI…ILMI.

This sequence belongs to the cytochrome b family. In terms of assembly, fungal cytochrome b-c1 complex contains 10 subunits; 3 respiratory subunits, 2 core proteins and 5 low-molecular weight proteins. Cytochrome b-c1 complex is a homodimer. Heme b is required as a cofactor.

The protein localises to the mitochondrion inner membrane. Functionally, component of the ubiquinol-cytochrome c reductase complex (complex III or cytochrome b-c1 complex) that is part of the mitochondrial respiratory chain. The b-c1 complex mediates electron transfer from ubiquinol to cytochrome c. Contributes to the generation of a proton gradient across the mitochondrial membrane that is then used for ATP synthesis. The sequence is that of Cytochrome b (cob) from Spizellomyces punctatus.